The following is an 89-amino-acid chain: Large ribosomal subunit protein bL27 (89 aa).

Residues 1–23 (MAHKKAGGSSRNGRDSAGKRLGI) are disordered.

It belongs to the bacterial ribosomal protein bL27 family.

The polypeptide is Large ribosomal subunit protein bL27 (Rhodopseudomonas palustris (strain BisA53)).